The sequence spans 287 residues: tRNA-cytidine(32) 2-sulfurtransferase (287 aa).

Residues Ser39 to Ser44 carry the PP-loop motif motif. Positions 114, 117, and 205 each coordinate [4Fe-4S] cluster.

Belongs to the TtcA family. Homodimer. Mg(2+) serves as cofactor. Requires [4Fe-4S] cluster as cofactor.

Its subcellular location is the cytoplasm. The catalysed reaction is cytidine(32) in tRNA + S-sulfanyl-L-cysteinyl-[cysteine desulfurase] + AH2 + ATP = 2-thiocytidine(32) in tRNA + L-cysteinyl-[cysteine desulfurase] + A + AMP + diphosphate + H(+). Its pathway is tRNA modification. Its function is as follows. Catalyzes the ATP-dependent 2-thiolation of cytidine in position 32 of tRNA, to form 2-thiocytidine (s(2)C32). The sulfur atoms are provided by the cysteine/cysteine desulfurase (IscS) system. This chain is tRNA-cytidine(32) 2-sulfurtransferase, found in Dechloromonas aromatica (strain RCB).